The primary structure comprises 305 residues: MSKRDILSVLDMEKDLSEIIDLSIELKKNRYRSYESLRNKVLGLIFEKPSTRTRTSLEVAIDQLGGHAVYLNPSEMQLGRGETISDTGHVLSRFLDAIAYRAYDHRNVVELARSTSIPVINALDDVEHPLQIVADFMTIKEKKGRFTNLKFSYIGDGNNMANSLMLGAAILGTDMYVASPKGFEPKQEFVEKARSIAKQHGSSITITNDPVEAARDADVIYTDVWISMGEESKKGEKEKAFKDFQINEKLVSNAKRDYIFMHCLPAHRGLEVTDGVADSINSVIFDEAENRLHSEKGVLYKLLSY.

Carbamoyl phosphate contacts are provided by residues 50–53, glutamine 77, arginine 101, and 128–131; these read STRT and HPLQ. Residues asparagine 159, aspartate 223, and 227-228 each bind L-ornithine; that span reads SM. Residues 263 to 264 and arginine 291 each bind carbamoyl phosphate; that span reads CL.

It belongs to the aspartate/ornithine carbamoyltransferase superfamily. OTCase family.

Its subcellular location is the cytoplasm. The enzyme catalyses carbamoyl phosphate + L-ornithine = L-citrulline + phosphate + H(+). It participates in amino-acid degradation; L-arginine degradation via ADI pathway; carbamoyl phosphate from L-arginine: step 2/2. Reversibly catalyzes the transfer of the carbamoyl group from carbamoyl phosphate (CP) to the N(epsilon) atom of ornithine (ORN) to produce L-citrulline. The sequence is that of Ornithine carbamoyltransferase, catabolic from Thermoplasma acidophilum (strain ATCC 25905 / DSM 1728 / JCM 9062 / NBRC 15155 / AMRC-C165).